We begin with the raw amino-acid sequence, 629 residues long: tRNA uridine 5-carboxymethylaminomethyl modification enzyme MnmG (629 aa).

FAD contacts are provided by residues 14–19 (GAGHAG), Val126, and Ser181. An NAD(+)-binding site is contributed by 273-287 (GPRYCPSIEDKVVRF). Residue Gln370 participates in FAD binding.

The protein belongs to the MnmG family. Homodimer. Heterotetramer of two MnmE and two MnmG subunits. Requires FAD as cofactor.

The protein resides in the cytoplasm. In terms of biological role, NAD-binding protein involved in the addition of a carboxymethylaminomethyl (cmnm) group at the wobble position (U34) of certain tRNAs, forming tRNA-cmnm(5)s(2)U34. This Geobacillus kaustophilus (strain HTA426) protein is tRNA uridine 5-carboxymethylaminomethyl modification enzyme MnmG.